The sequence spans 567 residues: Urease subunit alpha (567 aa).

One can recognise a Urease domain in the interval 129–567 (GGVDTHIHFI…LPMAQRYFLF (439 aa)). Ni(2+)-binding residues include His-134, His-136, and Lys-217. Lys-217 carries the N6-carboxylysine modification. A substrate-binding site is contributed by His-219. Ni(2+) contacts are provided by His-246 and His-272. Residue His-320 is the Proton donor of the active site. Residue Asp-360 coordinates Ni(2+).

This sequence belongs to the metallo-dependent hydrolases superfamily. Urease alpha subunit family. As to quaternary structure, heterotrimer of UreA (gamma), UreB (beta) and UreC (alpha) subunits. Three heterotrimers associate to form the active enzyme. It depends on Ni cation as a cofactor. In terms of processing, carboxylation allows a single lysine to coordinate two nickel ions.

It localises to the cytoplasm. The enzyme catalyses urea + 2 H2O + H(+) = hydrogencarbonate + 2 NH4(+). It participates in nitrogen metabolism; urea degradation; CO(2) and NH(3) from urea (urease route): step 1/1. The chain is Urease subunit alpha from Proteus hauseri.